A 555-amino-acid chain; its full sequence is Developmental and secondary metabolism regulator veA (555 aa).

Disordered regions lie at residues 1 to 23 (MATR…RITR), 39 to 60 (ERAR…VDPP), and 234 to 533 (RRRG…TLLS). Residues 13-23 (ETEHSVSRITR) are compositionally biased toward basic and acidic residues. The 204-residue stretch at 25–228 (GKRITYKLNV…AEQGCRVRIR (204 aa)) folds into the Velvet domain. Residues 39-44 (ERARAC) carry the Nuclear localization signal motif. The segment covering 239–258 (KRSDDYDFDEERSHRGRIPD) has biased composition (basic and acidic residues). Over residues 311 to 331 (AIPPAPAPAPPSSSTPTPVAP) the composition is skewed to pro residues. 2 stretches are compositionally biased toward polar residues: residues 336-372 (RSSS…TQVY) and 380-389 (HARNPSTSTE). A PEST region spans residues 439 to 479 (QTPSNAAPSLPPIASISAEYSNNLPQPPSNLAPSPNREPRG). Composition is skewed to basic and acidic residues over residues 492–503 (RPHEDAFSHSER) and 519–533 (ADRR…TLLS).

Belongs to the velvet family. VeA subfamily. Component of the heterotrimeric velvet complex composed of laeA, veA and velB; VeA acting as a bridging protein between laeA and velB.

The protein localises to the nucleus. Its subcellular location is the cytoplasm. In terms of biological role, component of the velvet transcription factor complex that controls sexual/asexual developmental ratio in response to light, promoting sexual development in the darkness while stimulating asexual sporulation under illumination. The velvet complex hat acts as a global regulator for secondary metabolite gene expression. Increases spore dispersing capacity by impacting conidiophore architecture. The protein is Developmental and secondary metabolism regulator veA of Aspergillus niger (strain ATCC 1015 / CBS 113.46 / FGSC A1144 / LSHB Ac4 / NCTC 3858a / NRRL 328 / USDA 3528.7).